We begin with the raw amino-acid sequence, 445 residues long: Phosphoglucosamine mutase (445 aa).

The Phosphoserine intermediate role is filled by S102. Mg(2+)-binding residues include S102, D241, D243, and D245. S102 bears the Phosphoserine mark.

This sequence belongs to the phosphohexose mutase family. Mg(2+) is required as a cofactor. Activated by phosphorylation.

The catalysed reaction is alpha-D-glucosamine 1-phosphate = D-glucosamine 6-phosphate. Its function is as follows. Catalyzes the conversion of glucosamine-6-phosphate to glucosamine-1-phosphate. In Escherichia coli O127:H6 (strain E2348/69 / EPEC), this protein is Phosphoglucosamine mutase.